Here is a 476-residue protein sequence, read N- to C-terminus: MKQRLSLAQSALEKLSARRGNTWYPIFHLAPPAGWMNDPNGLIYFNGRYHAFFQHHPASAYQGPMHWGHATSTDMLHWQHELVALAPGDKYDRDGCFSGSAVDDDGVLSLIYTGHICLEDRGNDSIIREVQCLATSHDGIRFEKQGCVLTPPEGIMHFRDPKVWHEDGSWWMVIGARDASDNGQVLLYRGTSLRDWHLEHVLAHSAAGESYMWECPDFFRCGNFHWLMFSPQGMNPSGYRFRNLFQSGVLAGNWKPGSVFALKGVFEELDYGHDFYAPQSMLAEDGRRIIMAWMNMWDSPVPTRSEAWAGCLTLPREVFERDGRLCQRPVREVESLRRKCQPLSPVRLHGVQLLTENVQAAELLVTWHTVDSHAEHYGIRLGEGLRFYVDNQAGRLILWRYYPEEGLDGYRSVELPDTEYLTLRIFLDRSSVEVFVNDGEATLSSRIYPQADSRQLSLYAAHGDAILTDGTLWMLT.

Substrate contacts are provided by residues 35–38, Gln-54, 97–98, 159–160, Glu-214, and Trp-297; these read WMND, FS, and RD. Residue Asp-38 is part of the active site.

Belongs to the glycosyl hydrolase 32 family. As to quaternary structure, homodimer.

The enzyme catalyses Hydrolysis of terminal non-reducing beta-D-fructofuranoside residues in beta-D-fructofuranosides.. Its function is as follows. May prevent the potential hasard of excessive sucrose accumulation. This is Raffinose invertase (rafD) from Escherichia coli.